We begin with the raw amino-acid sequence, 225 residues long: PKHD-type hydroxylase YbiX (225 aa).

The Fe2OG dioxygenase domain maps to 78–177 (TLSTPLFNRY…RVASFMWIQS (100 aa)). Fe cation-binding residues include histidine 96, aspartate 98, and histidine 158. A 2-oxoglutarate-binding site is contributed by arginine 168.

Requires Fe(2+) as cofactor. It depends on L-ascorbate as a cofactor.

The sequence is that of PKHD-type hydroxylase YbiX from Shigella sonnei (strain Ss046).